The primary structure comprises 599 residues: Kelch-like protein 24a (599 aa).

The BTB domain occupies 65 to 132 (TDVIISVQGR…VYTGRACITT (68 aa)). Residues 167–269 (CLGIQRFADA…HPNYFVQTVE (103 aa)) enclose the BACK domain. 6 Kelch repeats span residues 313 to 362 (VIVV…ALRN), 364 to 406 (IILS…VLLG), 407 to 453 (KVYA…SCAG), 455 to 501 (LFVI…SLNH), 503 to 543 (IYVC…VCNG), and 545 to 591 (IYIL…TVHR).

As to quaternary structure, forms homodimers. Component of the BCR(KLHL24) E3 ubiquitin ligase complex.

The protein resides in the perikaryon. The protein localises to the cell projection. It is found in the axon. It localises to the cytoplasm. Its subcellular location is the cell junction. The protein resides in the desmosome. The protein localises to the adherens junction. Functionally, necessary to maintain the balance between intermediate filament stability and degradation, a process that is essential for skin integrity. Reduces kainate receptor-mediated currents in brain neurons, most probably by modulating channel properties. It is required for proper heart development. The polypeptide is Kelch-like protein 24a (Danio rerio (Zebrafish)).